We begin with the raw amino-acid sequence, 367 residues long: Type II methyltransferase M.CviJI (367 aa).

The SAM-dependent MTase C5-type domain occupies 3-367 (FRTLELFAGI…EYLGYLVQYD (365 aa)). The active site involves Cys-73.

The protein belongs to the class I-like SAM-binding methyltransferase superfamily. C5-methyltransferase family.

It carries out the reaction a 2'-deoxycytidine in DNA + S-adenosyl-L-methionine = a 5-methyl-2'-deoxycytidine in DNA + S-adenosyl-L-homocysteine + H(+). Functionally, a methylase that recognizes the double-stranded sequence 5'-RGCY-3', methylates C-3 on both strands, and protects the DNA from cleavage by the CviJI endonuclease. The polypeptide is Type II methyltransferase M.CviJI (Chlorella (PBCV-IL3A)).